The primary structure comprises 290 residues: Arylamine N-acetyltransferase 2 (290 aa).

The Acyl-thioester intermediate role is filled by Cys-68. Thr-103 and Gly-104 together coordinate CoA. Position 106 to 107 (106 to 107 (IH)) interacts with substrate. Catalysis depends on residues His-107 and Asp-122. Positions 208, 214, and 287 each coordinate CoA.

This sequence belongs to the arylamine N-acetyltransferase family.

Its subcellular location is the cytoplasm. It carries out the reaction an arylamine + acetyl-CoA = an N-acetylarylamine + CoA. The catalysed reaction is an N-hydroxyarylamine + acetyl-CoA = an N-acetoxyarylamine + CoA. Catalyzes the N- or O-acetylation of various arylamine and heterocyclic amine substrates, and participates in the detoxification of a plethora of hydrazine and arylamine drugs. The chain is Arylamine N-acetyltransferase 2 (NAT2) from Macaca mulatta (Rhesus macaque).